The chain runs to 242 residues: Platinum sensitivity protein 3 (242 aa).

As to quaternary structure, component of the SHU complex composed of at least CSM2, PSY3, SHU1 and SHU2.

The protein resides in the nucleus. In terms of biological role, required for resistance to the DNA-damaging agents methyl methanesulfonate (MMS), cisplatin and oxaliplatin, but not to mitomycin C. Plays a role in protection against mutation accumulation. May be a component of the recombination-repair pathway. The sequence is that of Platinum sensitivity protein 3 (PSY3) from Saccharomyces cerevisiae (strain ATCC 204508 / S288c) (Baker's yeast).